We begin with the raw amino-acid sequence, 235 residues long: Small ribosomal subunit protein uS3 (235 aa).

The KH type-2 domain occupies 39–107 (IREFIKEECK…ELHLNIVEVR (69 aa)). The disordered stretch occupies residues 213–235 (QARDRKAQELQDGPAPRGAGGRR).

It belongs to the universal ribosomal protein uS3 family. In terms of assembly, part of the 30S ribosomal subunit. Forms a tight complex with proteins S10 and S14.

In terms of biological role, binds the lower part of the 30S subunit head. Binds mRNA in the 70S ribosome, positioning it for translation. The chain is Small ribosomal subunit protein uS3 from Ruegeria pomeroyi (strain ATCC 700808 / DSM 15171 / DSS-3) (Silicibacter pomeroyi).